The sequence spans 451 residues: Phosphoglucosamine mutase (451 aa).

Ser102 (phosphoserine intermediate) is an active-site residue. Ser102, Asp244, Asp246, and Asp248 together coordinate Mg(2+). The residue at position 102 (Ser102) is a Phosphoserine.

The protein belongs to the phosphohexose mutase family. The cofactor is Mg(2+). Activated by phosphorylation.

The catalysed reaction is alpha-D-glucosamine 1-phosphate = D-glucosamine 6-phosphate. Its function is as follows. Catalyzes the conversion of glucosamine-6-phosphate to glucosamine-1-phosphate. The chain is Phosphoglucosamine mutase from Lawsonia intracellularis (strain PHE/MN1-00).